The chain runs to 291 residues: Serine/threonine-protein phosphatase Pgam5, mitochondrial (291 aa).

A helical membrane pass occupies residues 7–23; sequence FACGTGAGLAAFYLQRL. The interval 59–78 is disordered; the sequence is KSLVRPQKNEQPQEQNRYNS. The span at 67 to 77 shows a compositional bias: polar residues; that stretch reads NEQPQEQNRYN.

This sequence belongs to the phosphoglycerate mutase family. BPG-dependent PGAM subfamily. In terms of assembly, interacts with Pk92B/ASK1.

The protein resides in the mitochondrion outer membrane. It catalyses the reaction O-phospho-L-seryl-[protein] + H2O = L-seryl-[protein] + phosphate. The enzyme catalyses O-phospho-L-threonyl-[protein] + H2O = L-threonyl-[protein] + phosphate. In terms of biological role, displays phosphatase activity for serine/threonine residues, and dephosphorylates and activates Pk92B kinase. Has apparently no phosphoglycerate mutase activity. In Drosophila willistoni (Fruit fly), this protein is Serine/threonine-protein phosphatase Pgam5, mitochondrial.